We begin with the raw amino-acid sequence, 51 residues long: Large ribosomal subunit protein bL33 (51 aa).

This sequence belongs to the bacterial ribosomal protein bL33 family.

The polypeptide is Large ribosomal subunit protein bL33 (Pseudoalteromonas atlantica (strain T6c / ATCC BAA-1087)).